A 480-amino-acid polypeptide reads, in one-letter code: Transmembrane protein 161A (480 aa).

The N-terminal stretch at 1–28 (MAVLGVQLVVTLFTATLMHRLAPHCSFA) is a signal peptide. Topologically, residues 29–98 (RWLLCNGSLF…LTAVDALVLR (70 aa)) are extracellular. N-linked (GlcNAc...) asparagine glycosylation occurs at N34. A helical transmembrane segment spans residues 99–119 (FFLEYQWFVDFAVYSVGVYLF). Over 120 to 134 (TEAYYFVLGPVQETN) the chain is Cytoplasmic. A helical membrane pass occupies residues 135–155 (IAVFWCLLTLAFSLKVFLMVT). At 156-166 (RLYFSTKEGGE) the chain is on the extracellular side. Residues 167–187 (RSVCLSFAFLFLLLAMLVQVV) form a helical membrane-spanning segment. Residues 188–224 (REETLELGLEPGLASMTQHLEPILKKQDWDWTLPVIK) are Cytoplasmic-facing. A helical membrane pass occupies residues 225–245 (LAIRLGLAVLGSLLGAFLIFP). The Extracellular segment spans residues 246 to 263 (GLRLAQTHQDALTLSADR). A helical membrane pass occupies residues 264–284 (PLLQLLLHTSFLSPLCTLWLW). Residues 285 to 304 (TKPVARDFLYQAPTRNMTFS) lie on the Cytoplasmic side of the membrane. A helical membrane pass occupies residues 305-325 (VPSEGAFDSLRLWVLVALCLL). The Extracellular portion of the chain corresponds to 326-370 (RLAVTRPHLQAYLCLAKARVEQLRKEAGRIEAREIQQRVVRVYCY). A helical transmembrane segment spans residues 371-391 (VTVVSLQYLTPLILTLHCTLL). Over 392 to 450 (LKTLGGYSWALSSTPPPLAPSQPSEALIPVDPAGDEAQQTAAQVAGILGGLLTPLFLRG) the chain is Cytoplasmic. Residues 451–473 (MLAYIIWWTAACQLLSSLFGLYF) traverse the membrane as a helical segment. At 474–480 (HQHLAAS) the chain is on the extracellular side.

This sequence belongs to the TMEM161 family.

Its subcellular location is the membrane. Its function is as follows. May play a role in protection against oxidative stress. Overexpression leads to reduced levels of oxidant-induced DNA damage and apoptosis. The polypeptide is Transmembrane protein 161A (Tmem161a) (Mus musculus (Mouse)).